The sequence spans 622 residues: Leucine-rich repeat and immunoglobulin-like domain-containing nogo receptor-interacting protein 1-B (622 aa).

The first 43 residues, 1-43 (MTFLQVTIKMVAREASGHSYLVACWQPILILMLGTVLSGSATG), serve as a signal peptide directing secretion. Cystine bridges form between cysteine 44/cysteine 50 and cysteine 48/cysteine 59. Residues 44-73 (CPSRCECSAQERSVVCHRRKLITLPEGIPI) form the LRRNT domain. At 44–563 (CPSRCECSAQ…FDMKTLIIAT (520 aa)) the chain is on the extracellular side. 11 LRR repeats span residues 74–95 (DTRL…EFLN), 98–119 (QLED…AFSN), 122–143 (GLRT…VFTG), 146–167 (NLTR…MFQE), 170–191 (NLKE…AFHG), 194–215 (SLEQ…AFSH), 218–239 (NLLT…SFRR), 266–287 (NITT…AIQH), 290–311 (YLRF…KMHN), 314–335 (RLQA…SFKG), and 338–359 (YLRV…AFHS). Asparagine 146 carries an N-linked (GlcNAc...) asparagine glycan. Asparagine 204 carries an N-linked (GlcNAc...) asparagine glycan. Residues asparagine 266, asparagine 276, and asparagine 295 are each glycosylated (N-linked (GlcNAc...) asparagine). The N-linked (GlcNAc...) asparagine glycan is linked to asparagine 343. Residues 371–425 (NPLACDCRLLWVFRRRWRLNFNRQQPSCETPEFLQGKEFKDFPDVLPPNYFTCQK) enclose the LRRCT domain. 3 disulfide bridges follow: cysteine 375/cysteine 398, cysteine 377/cysteine 423, and cysteine 448/cysteine 499. The Ig-like C2-type domain maps to 413-515 (PDVLPPNYFT…GNDTRLAHLH (103 aa)). N-linked (GlcNAc...) asparagine glycosylation is found at asparagine 494, asparagine 507, asparagine 528, and asparagine 544. The helical transmembrane segment at 564 to 584 (TMGFISFLGVVLFCLVLLFLW) threads the bilayer. Residues 585 to 622 (SRGKGNAKPNIEIEYVPRKVDGENSPNEGSHKISMKMI) lie on the Cytoplasmic side of the membrane.

It localises to the cell membrane. Its function is as follows. May play a role in regulating axonal regeneration and plasticity in the adult central nervous system. This Danio rerio (Zebrafish) protein is Leucine-rich repeat and immunoglobulin-like domain-containing nogo receptor-interacting protein 1-B (lingo1b).